Consider the following 471-residue polypeptide: Variant surface glycoprotein WRATAT A (471 aa).

Positions 1–18 (MSVLFLLLAITRTASVKA) are cleaved as a signal peptide. N-linked (GlcNAc...) asparagine glycosylation is found at Asn-61 and Asn-133. Residues 373–457 (QEQTLATTGT…ANTTGSSNSF (85 aa)) are disordered. The segment covering 379 to 392 (TTGTKSSSPQSTQQ) has biased composition (low complexity). Cystine bridges form between Cys-401-Cys-414 and Cys-410-Cys-427. Basic and acidic residues predominate over residues 401-447 (CNDKAKETECNSPCKWDKEEKDEKKRCKLSEEGKQAEKENQEGKDGK). Residues 448-457 (ANTTGSSNSF) are compositionally biased toward polar residues. A glycan (N-linked (GlcNAc...) asparagine) is linked at Asn-449. Ser-454 carries GPI-anchor amidated serine lipidation. The propeptide at 455 to 471 (NSFVIKTSPLLLAVLLL) is removed in mature form.

The protein resides in the cell membrane. VSG forms a coat on the surface of the parasite. The trypanosome evades the immune response of the host by expressing a series of antigenically distinct VSGs from an estimated 1000 VSG genes. This is Variant surface glycoprotein WRATAT A from Trypanosoma brucei rhodesiense.